A 342-amino-acid polypeptide reads, in one-letter code: 11-beta-hydroxysteroid dehydrogenase-like 6 (342 aa).

The helical; Signal-anchor for type II membrane protein transmembrane segment at 10–30 (FLFPLLTLYALLVFYPTYQRL) threads the bilayer. NADP(+)-binding positions include 54–80 (GAAS…VDIR) and D105. S184 is a binding site for substrate. Y197 functions as the Proton acceptor in the catalytic mechanism. NADP(+)-binding positions include 197–201 (YCASK) and K201.

This sequence belongs to the short-chain dehydrogenases/reductases (SDR) family.

The protein localises to the membrane. The sequence is that of 11-beta-hydroxysteroid dehydrogenase-like 6 (HSD6) from Arabidopsis thaliana (Mouse-ear cress).